The following is a 95-amino-acid chain: Glutamyl-tRNA(Gln) amidotransferase subunit C (95 aa).

This sequence belongs to the GatC family. In terms of assembly, heterotrimer of A, B and C subunits.

The catalysed reaction is L-glutamyl-tRNA(Gln) + L-glutamine + ATP + H2O = L-glutaminyl-tRNA(Gln) + L-glutamate + ADP + phosphate + H(+). It carries out the reaction L-aspartyl-tRNA(Asn) + L-glutamine + ATP + H2O = L-asparaginyl-tRNA(Asn) + L-glutamate + ADP + phosphate + 2 H(+). Its function is as follows. Allows the formation of correctly charged Asn-tRNA(Asn) or Gln-tRNA(Gln) through the transamidation of misacylated Asp-tRNA(Asn) or Glu-tRNA(Gln) in organisms which lack either or both of asparaginyl-tRNA or glutaminyl-tRNA synthetases. The reaction takes place in the presence of glutamine and ATP through an activated phospho-Asp-tRNA(Asn) or phospho-Glu-tRNA(Gln). The sequence is that of Glutamyl-tRNA(Gln) amidotransferase subunit C from Mesorhizobium japonicum (strain LMG 29417 / CECT 9101 / MAFF 303099) (Mesorhizobium loti (strain MAFF 303099)).